A 253-amino-acid chain; its full sequence is Probable U2 small nuclear ribonucleoprotein A' (253 aa).

LRR repeat units follow at residues 20–41 (NMRE…GVTR), 43–64 (QFDV…PTFS), 65–86 (RLNT…IATK), and 89–110 (NLKT…EPLA). An LRRCT domain is found at 123-161 (NPITHKDNYRMYMIYKLPTVRVIDFNRVRLTEREAAKKM). Disordered regions lie at residues 163 to 205 (KGKS…EDRE) and 232 to 253 (VPEK…AMES). Over residues 169–182 (KARDAIQKSVHTED) the composition is skewed to basic and acidic residues.

It belongs to the U2 small nuclear ribonucleoprotein A family. Interacts with rnp-3.

The protein localises to the nucleus. In terms of biological role, this protein is associated with sn-RNP U2. It helps the A' protein to bind stem loop IV of U2 snRNA. Required maternally for early embryonic development and zygotically for germline and somatic development. Has a role in the switch from mitosis to meiosis. Might function in alternative splicing. In Caenorhabditis elegans, this protein is Probable U2 small nuclear ribonucleoprotein A' (mog-2).